The chain runs to 203 residues: ATP-dependent Clp protease proteolytic subunit (203 aa).

Ser-100 acts as the Nucleophile in catalysis. The active site involves His-125.

This sequence belongs to the peptidase S14 family. In terms of assembly, component of the chloroplastic Clp protease core complex.

The protein localises to the plastid. Its subcellular location is the chloroplast stroma. It catalyses the reaction Hydrolysis of proteins to small peptides in the presence of ATP and magnesium. alpha-casein is the usual test substrate. In the absence of ATP, only oligopeptides shorter than five residues are hydrolyzed (such as succinyl-Leu-Tyr-|-NHMec, and Leu-Tyr-Leu-|-Tyr-Trp, in which cleavage of the -Tyr-|-Leu- and -Tyr-|-Trp bonds also occurs).. Cleaves peptides in various proteins in a process that requires ATP hydrolysis. Has a chymotrypsin-like activity. Plays a major role in the degradation of misfolded proteins. This Dioscorea elephantipes (Elephant's foot yam) protein is ATP-dependent Clp protease proteolytic subunit.